Here is a 442-residue protein sequence, read N- to C-terminus: Tryptophan synthase beta chain 2 (442 aa).

Lys-110 bears the N6-(pyridoxal phosphate)lysine mark.

Belongs to the TrpB family. Tetramer of two alpha and two beta chains. Pyridoxal 5'-phosphate serves as cofactor.

It catalyses the reaction (1S,2R)-1-C-(indol-3-yl)glycerol 3-phosphate + L-serine = D-glyceraldehyde 3-phosphate + L-tryptophan + H2O. It participates in amino-acid biosynthesis; L-tryptophan biosynthesis; L-tryptophan from chorismate: step 5/5. The beta subunit is responsible for the synthesis of L-tryptophan from indole and L-serine. This is Tryptophan synthase beta chain 2 from Thermococcus kodakarensis (strain ATCC BAA-918 / JCM 12380 / KOD1) (Pyrococcus kodakaraensis (strain KOD1)).